The primary structure comprises 406 residues: MSGCPFLGKSFGYAFKPLSAQGSEEDKSQAGVNRASKGGLIYGNYLQLEKVLNAQELQSEMKGNKIHDEHLFIITHQAYELWFKQILWELDSVREIFQNGHVRDERNMLKVITRMHRVVVILKLLVQQFSVLETMTALDFNDFREYLSPASGFQSLQFRLLENKIGVLQSLRVPYNRRHYRDNFRGKDNELLLKSEQERTLLQLVEAWLERTPGLEPHGFNFWGKLEKNIVKGLEEEFTKIQAKEESEEKEEQMAEFQKQKEVLLSLFDEKRHEHLLSKGERRLSYKALQGALMIYFYREEPRFQVPFQLLTFLMDVDSLMTKWRYNHVCLVHRMLGSKAGTGGSSGYQYLRSTVSDRYKVFVDLFNLSTYLVPRHWIPKMNPVIHKFLYTAEYCDSSYFSSDESD.

The residue at position 19 (S19) is a Phosphoserine. Substrate contacts are provided by residues F72–H76 and R144. A heme-binding site is contributed by H328. T342 serves as a coordination point for substrate.

It belongs to the tryptophan 2,3-dioxygenase family. As to quaternary structure, homotetramer. Dimer of dimers. The cofactor is heme.

The catalysed reaction is L-tryptophan + O2 = N-formyl-L-kynurenine. It participates in amino-acid degradation; L-tryptophan degradation via kynurenine pathway; L-kynurenine from L-tryptophan: step 1/2. Its function is as follows. Heme-dependent dioxygenase that catalyzes the oxidative cleavage of the L-tryptophan (L-Trp) pyrrole ring and converts L-tryptophan to N-formyl-L-kynurenine. Catalyzes the oxidative cleavage of the indole moiety. The sequence is that of Tryptophan 2,3-dioxygenase from Bos taurus (Bovine).